The following is a 262-amino-acid chain: Small ribosomal subunit protein uS2 (262 aa).

Residues 240–262 (NLDEKEESQEAESTEENTTVESN) form a disordered region. Positions 243-254 (EKEESQEAESTE) are enriched in acidic residues.

The protein belongs to the universal ribosomal protein uS2 family.

The protein is Small ribosomal subunit protein uS2 of Staphylococcus haemolyticus (strain JCSC1435).